We begin with the raw amino-acid sequence, 343 residues long: D-alanine--D-alanine ligase (343 aa).

The ATP-grasp domain occupies 129–335 (KYVLENFGVK…YGELISEIIE (207 aa)). Residue 162–217 (ENKLGYDVFIKPSNSGSSVGISKAHNREELEAGLEEALKFDRKVLVEVALNAREIE) coordinates ATP. D288, E302, and N304 together coordinate Mg(2+).

The protein belongs to the D-alanine--D-alanine ligase family. Mg(2+) serves as cofactor. Requires Mn(2+) as cofactor.

The protein resides in the cytoplasm. The catalysed reaction is 2 D-alanine + ATP = D-alanyl-D-alanine + ADP + phosphate + H(+). Its pathway is cell wall biogenesis; peptidoglycan biosynthesis. Its function is as follows. Cell wall formation. The polypeptide is D-alanine--D-alanine ligase (Clostridium novyi (strain NT)).